Reading from the N-terminus, the 435-residue chain is E3 ubiquitin-protein ligase RING1 (435 aa).

Residues 46-86 form an RING-type zinc finger; sequence CPICLDMLKKTMTTKECLHRFCSDCIVTALRSGNKECPTCR. The tract at residues 144–322 is disordered; it reads KLQSQNRPQR…TEGEGNGELG (179 aa). Residues 157–170 show a composition bias toward gly residues; that stretch reads KGGGGGGGGGGNGN. Low complexity-rich tracts occupy residues 171–188, 202–211, 222–251, and 259–278; these read GAAN…TAVG, SNDSNSNTNS, SGTS…TSAT, and SNPP…SSSS. Phosphoserine is present on Ser-202. Position 266 is a phosphoserine (Ser-266). Thr-267 bears the Phosphothreonine mark. A Phosphoserine modification is found at Ser-269. The span at 309–322 shows a compositional bias: acidic residues; it reads SNIDTEGEGNGELG.

Interacts with ORD. Component of PRC1 complex, which contains many PcG proteins like Pc, ph, Scm, Psc, Sce and also chromatin remodeling proteins such as histone deacetylases. This complex is distinct from the Esc/E(z) complex, at least composed of esc, E(z), Su(z)12, HDAC1/Rpd3 and Caf1-55. The two complexes however cooperate and interact together during the first 3 hours of development to establish PcG silencing. In terms of tissue distribution, ubiquitously expressed in syncytial blastoderm embryos. Ubiquitously expressed until stage 11. Then, it is only expressed in the neuroectoderm. Later in embryonic development, it is only expressed in the CNS. In larvae, it is expressed in all imaginal disks. Expressed in the male and female gonads.

The protein resides in the nucleus. It is found in the chromosome. It catalyses the reaction S-ubiquitinyl-[E2 ubiquitin-conjugating enzyme]-L-cysteine + [acceptor protein]-L-lysine = [E2 ubiquitin-conjugating enzyme]-L-cysteine + N(6)-ubiquitinyl-[acceptor protein]-L-lysine.. Its pathway is protein modification; protein ubiquitination. Its function is as follows. E3 ubiquitin-protein ligase that mediates monoubiquitination of 'Lys-118' of histone H2A, thereby playing a central role in histone code and gene regulation. H2A 'Lys-118' ubiquitination gives a specific tag for epigenetic transcriptional repression. Polycomb group (PcG) protein. PcG proteins act by forming multiprotein complexes, which are required to maintain the transcriptionally repressive state of homeotic genes throughout development. PcG proteins are not required to initiate repression, but to maintain it during later stages of development. PcG complexes act via modification of histones, such as methylation, deacetylation, ubiquitination rendering chromatin heritably changed in its expressibility. May play a role in meiotic sister chromatid cohesion. This is E3 ubiquitin-protein ligase RING1 (Sce) from Drosophila melanogaster (Fruit fly).